A 163-amino-acid polypeptide reads, in one-letter code: Jun dimerization protein 2 (163 aa).

Disordered regions lie at residues 1-20 (MMPG…PGLG) and 58-89 (GKRP…AARC). A Glycyl lysine isopeptide (Lys-Gly) (interchain with G-Cter in SUMO2) cross-link involves residue Lys65. The bZIP domain occupies 72–135 (EERRKRRREK…QQLILMLNRH (64 aa)). The segment at 74-96 (RRKRRREKNKVAAARCRNKKKER) is basic motif. Residues 100–128 (LQRESERLELMNAELKTQIEELKQERQQL) form a leucine-zipper region. Thr148 is modified (phosphothreonine; by MAPK8).

This sequence belongs to the bZIP family. ATF subfamily. Forms a homodimer or heterodimer with JUN, JUNB, JUND, CEBPG and ATF2 thereby inhibiting transactivation by JUN, ATF2 and CEBPG. Binds multiple DNA elements such as cAMP-response element (CRE) and TPA response element (TRE) either as homodimer or heterodimer. Interacts with IRF2BP1. Post-translationally, phosphorylation of Thr-148 by MAPK8 in response to different stress conditions such as, UV irradiation, oxidatives stress and anisomycin treatments. In terms of processing, polyubiquitinated; probably by IRF2BP1.

The protein resides in the nucleus. In terms of biological role, component of the AP-1 transcription factor that represses transactivation mediated by the Jun family of proteins. Involved in a variety of transcriptional responses associated with AP-1 such as UV-induced apoptosis, cell differentiation, tumorigenesis and antitumogeneris. Can also function as a repressor by recruiting histone deacetylase 3/HDAC3 to the promoter region of JUN. May control transcription via direct regulation of the modification of histones and the assembly of chromatin. The polypeptide is Jun dimerization protein 2 (JDP2) (Homo sapiens (Human)).